The following is a 31-amino-acid chain: MPRRRRASRPVRRRRRPRVSRRRRRGGRRRR.

Residues 1-31 (MPRRRRASRPVRRRRRPRVSRRRRRGGRRRR) are disordered.

In terms of tissue distribution, testis.

The protein localises to the nucleus. It localises to the chromosome. Protamines substitute for histones in the chromatin of sperm during the haploid phase of spermatogenesis. They compact sperm DNA into a highly condensed, stable and inactive complex. The sequence is that of Protamine CIII from Oncorhynchus mykiss (Rainbow trout).